Reading from the N-terminus, the 311-residue chain is N-acetylmuramic acid 6-phosphate etherase (311 aa).

The 164-residue stretch at 64 to 227 folds into the SIS domain; it reads IYQRLIDNGR…SSGVMIKLGK (164 aa). Glu-92 functions as the Proton donor in the catalytic mechanism. The active site involves Glu-123.

This sequence belongs to the GCKR-like family. MurNAc-6-P etherase subfamily. In terms of assembly, homodimer.

The enzyme catalyses N-acetyl-D-muramate 6-phosphate + H2O = N-acetyl-D-glucosamine 6-phosphate + (R)-lactate. Its pathway is amino-sugar metabolism; N-acetylmuramate degradation. Its function is as follows. Specifically catalyzes the cleavage of the D-lactyl ether substituent of MurNAc 6-phosphate, producing GlcNAc 6-phosphate and D-lactate. The chain is N-acetylmuramic acid 6-phosphate etherase from Prochlorococcus marinus (strain SARG / CCMP1375 / SS120).